The following is a 542-amino-acid chain: Glucose-6-phosphate isomerase (542 aa).

Glu354 acts as the Proton donor in catalysis. Residues His385 and Lys505 contribute to the active site.

This sequence belongs to the GPI family.

It is found in the cytoplasm. The enzyme catalyses alpha-D-glucose 6-phosphate = beta-D-fructose 6-phosphate. It functions in the pathway carbohydrate biosynthesis; gluconeogenesis. Its pathway is carbohydrate degradation; glycolysis; D-glyceraldehyde 3-phosphate and glycerone phosphate from D-glucose: step 2/4. Its function is as follows. Catalyzes the reversible isomerization of glucose-6-phosphate to fructose-6-phosphate. The chain is Glucose-6-phosphate isomerase from Nitrosospira multiformis (strain ATCC 25196 / NCIMB 11849 / C 71).